We begin with the raw amino-acid sequence, 393 residues long: uncharacterized protein (393 aa).

8 helical membrane-spanning segments follow: residues 15-35, 56-76, 86-106, 131-151, 176-196, 253-273, 289-309, and 349-369; these read IVAF…VTIF, WGWI…NVII, FYAS…FQIV, AVLI…LITW, LSLT…VIAF, LLAN…VFMI, LIDL…IPVA, and VYLP…QVIW.

The protein resides in the cell membrane. This is an uncharacterized protein from Mycoplasma genitalium (strain ATCC 33530 / DSM 19775 / NCTC 10195 / G37) (Mycoplasmoides genitalium).